We begin with the raw amino-acid sequence, 203 residues long: MGADKITSKILDDANNTASKIKSEAQKEADLILEKAKIEAEEQTQDILKRGDKEAETTYNRILAEARLNSKKKMLKERENLINMAIEKLKEDLKELPKKDSYKDILLKLIIEGVMSLDGNELVVVLNEQDMELIEDSALWAIEKELESKVKKVIILKKGAPANIIGGCIIKTADGTKFCDNSLESVFERNMESIRANVASLLF.

It belongs to the V-ATPase E subunit family. In terms of assembly, has multiple subunits with at least A(3), B(3), C, D, E, F, H, I and proteolipid K(x).

Its subcellular location is the cell membrane. Functionally, component of the A-type ATP synthase that produces ATP from ADP in the presence of a proton gradient across the membrane. This Methanococcus aeolicus (strain ATCC BAA-1280 / DSM 17508 / OCM 812 / Nankai-3) protein is A-type ATP synthase subunit E.